Reading from the N-terminus, the 33-residue chain is Brevinin-2PTd (33 aa).

Cysteines 27 and 33 form a disulfide.

As to expression, expressed by the skin glands.

The protein localises to the secreted. Its function is as follows. Has antibacterial activity against the Gram-positive bacterium S.aureus ATCC 25923 and the Gram-negative bacterium E.coli ATCC 25726. The chain is Brevinin-2PTd from Pulchrana picturata (Malaysian fire frog).